Reading from the N-terminus, the 312-residue chain is Very-long-chain 3-oxoacyl-CoA reductase-like protein At1g24470 (312 aa).

A helical transmembrane segment spans residues Leu-14–Leu-34. Gly-52–Leu-81 is a binding site for NADP(+). Ser-190 is a binding site for substrate. The active-site Proton acceptor is Tyr-205.

This sequence belongs to the short-chain dehydrogenases/reductases (SDR) family. Expressed in green siliques, flowers, inflorescence stems and leaves. Not detected in roots.

It localises to the endoplasmic reticulum membrane. In terms of biological role, probable reductase, but unlike KCR1, has no beta-ketoacyl-coenzyme A reductase activity. In Arabidopsis thaliana (Mouse-ear cress), this protein is Very-long-chain 3-oxoacyl-CoA reductase-like protein At1g24470 (KCR2).